The chain runs to 389 residues: Glycerol-3-phosphate dehydrogenase [NAD(+)] 2 (389 aa).

Residues 40–45, Phe128, Lys151, and Ala184 contribute to the NAD(+) site; that span reads GSGNWG. Residue Lys151 coordinates substrate. Catalysis depends on Lys244, which acts as the Proton acceptor. NAD(+) is bound by residues Arg309 and Gln338. 309–310 contacts substrate; it reads RN.

The protein belongs to the NAD-dependent glycerol-3-phosphate dehydrogenase family.

It is found in the cytoplasm. The catalysed reaction is sn-glycerol 3-phosphate + NAD(+) = dihydroxyacetone phosphate + NADH + H(+). This chain is Glycerol-3-phosphate dehydrogenase [NAD(+)] 2 (GPD2), found in Zygosaccharomyces rouxii.